A 129-amino-acid polypeptide reads, in one-letter code: MSYKFPDNLNYADTHEYVLEEKGLLKIGVSEFAIDQLGDIVFVELADQGSTLEKGETFGTIESVKAVEEVYLPFSGEIVSVNENVVDNPELLQNDPIGEGWLVILKPKTKVSISDLMTSEEYQSKVVPK.

The Lipoyl-binding domain maps to 24 to 106 (LLKIGVSEFA…IGEGWLVILK (83 aa)). The residue at position 65 (lysine 65) is an N6-lipoyllysine.

The protein belongs to the GcvH family. In terms of assembly, the glycine cleavage system is composed of four proteins: P, T, L and H. The cofactor is (R)-lipoate.

The glycine cleavage system catalyzes the degradation of glycine. The H protein shuttles the methylamine group of glycine from the P protein to the T protein. The protein is Glycine cleavage system H protein of Prochlorococcus marinus (strain MIT 9215).